Consider the following 423-residue polypeptide: D-tagatose-1,6-bisphosphate aldolase subunit GatZ (423 aa).

The protein belongs to the GatZ/KbaZ family. GatZ subfamily. Forms a complex with GatY.

It participates in carbohydrate metabolism; D-tagatose 6-phosphate degradation; D-glyceraldehyde 3-phosphate and glycerone phosphate from D-tagatose 6-phosphate: step 2/2. Component of the tagatose-1,6-bisphosphate aldolase GatYZ that is required for full activity and stability of the Y subunit. Could have a chaperone-like function for the proper and stable folding of GatY. When expressed alone, GatZ does not show any aldolase activity. Is involved in the catabolism of galactitol. This is D-tagatose-1,6-bisphosphate aldolase subunit GatZ from Salmonella agona (strain SL483).